We begin with the raw amino-acid sequence, 210 residues long: Rho-related GTP-binding protein RhoD (210 aa).

Position 24–31 (24–31 (GDGGCGKT)) interacts with GTP. The Effector region signature appears at 46–54 (YSPTVFERY). GTP-binding positions include 71–75 (DTAGQ) and 129–132 (CKID). Cysteine methyl ester is present on Cys-207. Cys-207 carries S-geranylgeranyl cysteine lipidation. A propeptide spans 208–210 (LAT) (removed in mature form).

This sequence belongs to the small GTPase superfamily. Rho family. In terms of assembly, interacts with PAK5. Interacts (in GTP-bound form) with DAPK3, FILIP1 and WHAMM. Interacts (independent of GTP-loaded status) with ANKFY1. Widely expressed.

Its subcellular location is the cell membrane. It is found in the early endosome. Its function is as follows. Involved in endosome dynamics. May coordinate membrane transport with the function of the cytoskeleton. Involved in the internalization and trafficking of activated tyrosine kinase receptors such as PDGFRB. Participates in the reorganization of actin cytoskeleton; the function seems to involve WHAMM and includes regulation of filopodia formation and actin filament bundling. Can modulate the effect of DAPK3 in reorganization of actin cytoskeleton and focal adhesion dissolution. The polypeptide is Rho-related GTP-binding protein RhoD (Rhod) (Mus musculus (Mouse)).